The chain runs to 201 residues: Homeobox protein goosecoid-2 (201 aa).

Disordered stretches follow at residues 1–55 (MATA…PEAP), 95–124 (PATPSPLTAPRAGSPALTGTSGPGPQRRTR), and 179–201 (RHQKRASSSRLLPGTKKTPKESC). Residues 95–106 (PATPSPLTAPRA) are compositionally biased toward low complexity. The segment at residues 123–182 (TRRHRTIFSEEQLQALEALFVQNQYPDVGTRERLAVRIRLREERVEVWFKNRRAKWRHQK) is a DNA-binding region (homeobox).

This sequence belongs to the paired homeobox family. Bicoid subfamily. Expressed in adult testis.

The protein resides in the nucleus. Its function is as follows. May have a role in development. May regulate its own transcription. May bind the bicoid consensus sequence TAATCC. This is Homeobox protein goosecoid-2 (Gsc2) from Mus musculus (Mouse).